Here is a 206-residue protein sequence, read N- to C-terminus: MTKRTSAKYKIDRRMGENIWGRPKSPVNKREYGPGQHGQRRKNKLSDFGTQLRAKQKLKGYYGDLTEKQFRKIFAEAERVKGDTGEMLVGLLERRLDAIVYRAKFVPTIFAARQFVNHGHVTVNGQRVNIGSYRCKEGDVIQVREKSRQLALVLEATQLAERDVPDYIEVDYSKMTATFVRTPGLGDVPYPVQMEPNLVVEFYAKN.

The interval 15–46 (MGENIWGRPKSPVNKREYGPGQHGQRRKNKLS) is disordered. Residues 94–154 (RRLDAIVYRA…EKSRQLALVL (61 aa)) form the S4 RNA-binding domain.

Belongs to the universal ribosomal protein uS4 family. As to quaternary structure, part of the 30S ribosomal subunit. Contacts protein S5. The interaction surface between S4 and S5 is involved in control of translational fidelity.

One of the primary rRNA binding proteins, it binds directly to 16S rRNA where it nucleates assembly of the body of the 30S subunit. Functionally, with S5 and S12 plays an important role in translational accuracy. The polypeptide is Small ribosomal subunit protein uS4 (Cereibacter sphaeroides (strain ATCC 17029 / ATH 2.4.9) (Rhodobacter sphaeroides)).